The following is a 181-amino-acid chain: Adenine phosphoribosyltransferase (181 aa).

It belongs to the purine/pyrimidine phosphoribosyltransferase family. Homodimer.

The protein resides in the cytoplasm. The enzyme catalyses AMP + diphosphate = 5-phospho-alpha-D-ribose 1-diphosphate + adenine. The protein operates within purine metabolism; AMP biosynthesis via salvage pathway; AMP from adenine: step 1/1. Its function is as follows. Catalyzes a salvage reaction resulting in the formation of AMP, that is energically less costly than de novo synthesis. The chain is Adenine phosphoribosyltransferase from Shewanella woodyi (strain ATCC 51908 / MS32).